Reading from the N-terminus, the 323-residue chain is Olfactory receptor 4K5 (323 aa).

Residues 1–25 (MDKSNSSVVSEFVLLGLCSSQKLQL) are Extracellular-facing. A glycan (N-linked (GlcNAc...) asparagine) is linked at N5. A helical transmembrane segment spans residues 26-49 (FYFCFFSVLYTVIVLGNLLIILTV). Residues 50–57 (TSDTSLHS) are Cytoplasmic-facing. A helical membrane pass occupies residues 58–79 (PMYFLLGNLSFVDICQASFATP). The Extracellular segment spans residues 80–100 (KMIADFLSAHETISFSGCIAQ). Cysteines 97 and 189 form a disulfide. A helical membrane pass occupies residues 101–120 (IFFIHLFTGGEMVLLVSMAY). The Cytoplasmic segment spans residues 121–139 (DRYVAICKPLYYVVIMSRR). The chain crosses the membrane as a helical span at residues 140-158 (TCTVLVMISWAVSLVHTLS). Over 159–195 (QLSFTVNLPFCGPNVVDSFFCDLPRVTKLACLDSYII) the chain is Extracellular. Residues 196–219 (EILIVVNSGILSLSTFSLLVSSYI) traverse the membrane as a helical segment. Residues 220–235 (IILVTVWLKSSAAMAK) are Cytoplasmic-facing. The chain crosses the membrane as a helical span at residues 236 to 258 (AFSTLASHIAVVILFFGPCIFIY). Topologically, residues 259 to 269 (VWPFTISPLDK) are extracellular. A helical membrane pass occupies residues 270 to 289 (FLAIFYTVFTPVLNPIIYTL). The Cytoplasmic portion of the chain corresponds to 290–323 (RNRDMKAAVRKIVNHYLRPRRISEMSLVVRTSFH).

This sequence belongs to the G-protein coupled receptor 1 family.

It is found in the cell membrane. Odorant receptor. The sequence is that of Olfactory receptor 4K5 (OR4K5) from Homo sapiens (Human).